Reading from the N-terminus, the 663-residue chain is Cytoplasmic dynein 1 intermediate chain (663 aa).

Residues 17–37 show a composition bias toward basic and acidic residues; sequence LREEKDRRRREKEIKDMEEAA. Disordered stretches follow at residues 17-52 and 75-107; these read LREE…DQRK and SVNS…KKQP. The segment covering 75 to 85 has biased composition (low complexity); that stretch reads SVNSMTSDNSN. Residues 86-99 are compositionally biased toward polar residues; that stretch reads TQTPDASLQATVNG. WD repeat units follow at residues 311-360, 364-404, 413-454, 463-503, 508-553, 556-596, and 602-641; these read SKNR…STPE, HCQS…RTPI, AHTH…QPQD, SKAI…SGVN, RHLG…PLYS, DNSD…EVPT, and AGAP…AQPS.

It belongs to the dynein intermediate chain family. As to quaternary structure, homodimer. The cytoplasmic dynein 1 complex consists of two catalytic heavy chains (HCs) and a number of non-catalytic subunits presented by intermediate chains (ICs), light intermediate chains (LICs) and light chains (LCs). High levels of isoform 1b, isoform 1c, isoform 3a and isoform 4 accumulate in early egg chambers and at stage 9 become concentrated at the posterior of the oocyte. Isoform 5a and isoform 5b are highly expressed in adult head and to a lesser extent in adult torso. Isoform 1a, isoform 2a and isoform 2b are found in all tissues examined, including ovaries, midgut, torso and head.

The protein resides in the cytoplasm. The protein localises to the cytoskeleton. It localises to the lysosome membrane. It is found in the nucleus membrane. In terms of biological role, acts as one of several non-catalytic accessory components of the cytoplasmic dynein 1 complex that are thought to be involved in linking dynein to cargos and to adapter proteins that regulate dynein function. Cytoplasmic dynein 1 acts as a motor for the intracellular retrograde motility of vesicles and organelles along microtubules. The intermediate chains mediate the help dynein bind to dynactin 150 kDa component. The polypeptide is Cytoplasmic dynein 1 intermediate chain (sw) (Drosophila melanogaster (Fruit fly)).